The chain runs to 119 residues: Holo-[acyl-carrier-protein] synthase (119 aa).

Positions 8 and 58 each coordinate Mg(2+).

It belongs to the P-Pant transferase superfamily. AcpS family. Mg(2+) serves as cofactor.

It is found in the cytoplasm. The enzyme catalyses apo-[ACP] + CoA = holo-[ACP] + adenosine 3',5'-bisphosphate + H(+). In terms of biological role, transfers the 4'-phosphopantetheine moiety from coenzyme A to a Ser of acyl-carrier-protein. The sequence is that of Holo-[acyl-carrier-protein] synthase from Bacillus cytotoxicus (strain DSM 22905 / CIP 110041 / 391-98 / NVH 391-98).